We begin with the raw amino-acid sequence, 460 residues long: Probable protein phosphatase 2C 38 (460 aa).

Disordered regions lie at residues 1 to 30 and 83 to 111; these read MVAVTGGRPPGLQDAPGAPPPAPAAEAVPS and RPMRRRRRGGSSSSSSSPRDREPRDGRIA. Positions 100–109 are enriched in basic and acidic residues; the sequence is PRDREPRDGR. The PPM-type phosphatase domain occupies 118–432; it reads AASLYTMRGN…DDCAVVCLFL (315 aa). Mn(2+) contacts are provided by Asp154 and Gly155. The disordered stretch occupies residues 192 to 219; the sequence is VTSSMTEGGGTERMDRDTETPLGTEENG. Positions 201 to 210 are enriched in basic and acidic residues; sequence GTERMDRDTE. Asp377 and Asp423 together coordinate Mn(2+).

Belongs to the PP2C family. Requires Mg(2+) as cofactor. Mn(2+) serves as cofactor.

It catalyses the reaction O-phospho-L-seryl-[protein] + H2O = L-seryl-[protein] + phosphate. It carries out the reaction O-phospho-L-threonyl-[protein] + H2O = L-threonyl-[protein] + phosphate. The sequence is that of Probable protein phosphatase 2C 38 from Oryza sativa subsp. japonica (Rice).